A 386-amino-acid chain; its full sequence is 2-isopropylmalate synthase (386 aa).

A Pyruvate carboxyltransferase domain is found at 12 to 265; sequence VRIFDTTLRD…EVNIKTYKLY (254 aa). A divalent metal cation-binding residues include aspartate 21, histidine 203, histidine 205, and asparagine 239.

Belongs to the alpha-IPM synthase/homocitrate synthase family. Homodimer. It depends on a divalent metal cation as a cofactor.

It carries out the reaction 3-methyl-2-oxobutanoate + acetyl-CoA + H2O = (2S)-2-isopropylmalate + CoA + H(+). It participates in amino-acid biosynthesis; L-leucine biosynthesis; L-leucine from 3-methyl-2-oxobutanoate: step 1/4. Functionally, catalyzes the condensation of the acetyl group of acetyl-CoA with 3-methyl-2-oxobutanoate (2-oxoisovalerate) to form 3-carboxy-3-hydroxy-4-methylpentanoate (2-isopropylmalate). Carries out the first step of the leucine biosynthesis pathway. This is 2-isopropylmalate synthase (leuA) from Sulfurisphaera tokodaii (strain DSM 16993 / JCM 10545 / NBRC 100140 / 7) (Sulfolobus tokodaii).